The chain runs to 1080 residues: Adenylate cyclase type 7 (1080 aa).

Residues 1 to 33 lie on the Cytoplasmic side of the membrane; it reads MPAKGRYFLNEGEEGPDQDALYEKYQLTSQHGP. 6 consecutive transmembrane segments (helical) span residues 34-54, 63-83, 95-117, 122-142, 147-167, and 176-196; these read LLLTLLLVAATACVALIIIAF, QAILGMAFLVLAVFAALSVLM, ALALLTWACLVALGYVLVFDAWT, AWEQVPFFLFIVFVVYTLLPF, AVAVGAVSTASHLLVLGSLMG, and VGLQLLANAVIFLCGNLTGAF. Residues 197–594 lie on the Cytoplasmic side of the membrane; it reads HKHQMQDASR…YRLAPIPRAR (398 aa). A Guanylate cyclase 1 domain is found at 279–406; it reads SILYADIVGF…HDVSLANRME (128 aa). 3 residues coordinate Mg(2+): Asp-284, Ile-285, and Asp-328. ATP-binding positions include 284 to 289, 326 to 328, and Arg-372; these read DIVGFT and LGD. Residues 454–474 form a disordered region; the sequence is DPRSQQPPPPSQHLPRPKGDA. The tract at residues 477–482 is mediates regulation of adenylate cyclase activity by C5 alpha-induced G- beta and gamma pathway; the sequence is KMRASV. The mediates regulation of adenylate cyclase activity by sphingosine 1-phosphate-induced G alpha 13 pathway stretch occupies residues 491–499; that stretch reads WGAARPFAH. A disordered region spans residues 504-546; it reads ESVSSGETHVPNGRRPKSVPQRHRRTPDRSMSPKGRSEDDSYD. The tract at residues 506–584 is modulates adenylate cyclase activity by modulating the binding of G(s)alpha to the high-affinity G(s)alpha binding site in 7C1a/7C2; that stretch reads VSSGETHVPN…IFLEKGFERE (79 aa). Basic residues predominate over residues 515–529; the sequence is NGRRPKSVPQRHRRT. 3 helical membrane passes run 595–615, 620–640, and 669–688; these read HDFACASLIFVCILLVHVLLM, ALGVSFGLVACVLGLVLGLCF, and LTLAVLTIGSLLTVAIINLP. Asn-701 carries an N-linked (GlcNAc...) asparagine glycan. 2 helical membrane-spanning segments follow: residues 718–737 and 746–773; these read PLPYYTCSCVLGFIACSVFL and VLLTVALVAYLVLFNLSPCWQWDCCGQG. Asn-776 and Asn-781 each carry an N-linked (GlcNAc...) asparagine glycan. The helical transmembrane segment at 794–814 threads the bilayer; it reads DLKTMTNFYLVLFYITLLTLS. Over 815-1080 the chain is Cytoplasmic; sequence RQIDYYCRLD…TAKFQGLGLN (266 aa). The Guanylate cyclase 2 domain occupies 879–1023; it reads CVMFASVPDF…NTVNVASRME (145 aa). Residues Lys-931, 1010-1012, 1017-1021, and Lys-1057 each bind ATP; these read DIW and NVASR.

This sequence belongs to the adenylyl cyclase class-4/guanylyl cyclase family. It depends on Mg(2+) as a cofactor. The cofactor is Mn(2+). In terms of processing, phosphorylated by PRKCD.

Its subcellular location is the membrane. It catalyses the reaction ATP = 3',5'-cyclic AMP + diphosphate. With respect to regulation, activated by the G protein alpha subunit. Activated by the G protein beta and gamma subunit complex. Activated by GNA13 and GNA12. Ethanol and phorbol 12,13-dibutanoate significantly potentiate adenylate cyclase activity generated in response to the activation of the prostanoid receptor by the agonist prostaglandin E1(1-) in a PKC-dependent manner. Inhibited by lithium. Its function is as follows. Catalyzes the formation of cAMP in response to activation of G protein-coupled receptors. Functions in signaling cascades activated namely by thrombin and sphingosine 1-phosphate and mediates regulation of cAMP synthesis through synergistic action of the stimulatory G alpha protein with GNA13. Also, during inflammation, mediates zymosan-induced increase intracellular cAMP, leading to protein kinase A pathway activation in order to modulate innate immune responses through heterotrimeric G proteins G(12/13). Functions in signaling cascades activated namely by dopamine and C5 alpha chain and mediates regulation of cAMP synthesis through synergistic action of the stimulatory G protein with G beta:gamma complex. Functions, through cAMP response regulation, to keep inflammation under control during bacterial infection by sensing the presence of serum factors, such as the bioactive lysophospholipid (LPA) that regulate LPS-induced TNF-alpha production. However, it is also required for the optimal functions of B and T cells during adaptive immune responses by regulating cAMP synthesis in both B and T cells. The chain is Adenylate cyclase type 7 from Homo sapiens (Human).